The primary structure comprises 226 residues: tRNA (guanine-N(7)-)-methyltransferase (226 aa).

The interval 1-21 (MTHPQQPHGPLRSFGRLKSRP) is disordered. S-adenosyl-L-methionine contacts are provided by Glu59, Glu84, Asp111, and Asp133. Residue Asp133 is part of the active site. A substrate-binding site is contributed by Lys137. An interaction with RNA region spans residues 139–144 (RHNKRR). Residues Asp169 and 206-209 (TRYE) each bind substrate.

This sequence belongs to the class I-like SAM-binding methyltransferase superfamily. TrmB family.

It carries out the reaction guanosine(46) in tRNA + S-adenosyl-L-methionine = N(7)-methylguanosine(46) in tRNA + S-adenosyl-L-homocysteine. It participates in tRNA modification; N(7)-methylguanine-tRNA biosynthesis. Functionally, catalyzes the formation of N(7)-methylguanine at position 46 (m7G46) in tRNA. The polypeptide is tRNA (guanine-N(7)-)-methyltransferase (Caulobacter sp. (strain K31)).